The following is a 148-amino-acid chain: uncharacterized protein (148 aa).

Positions 25–148 (LSIGLIFSLI…YSITNIFIYN (124 aa)) constitute an ABC transmembrane type-1 domain. A run of 3 helical transmembrane segments spans residues 26-46 (SIGL…PLII), 60-80 (IVII…STYI), and 127-147 (ITRV…IFIY).

The protein resides in the cell membrane. This is an uncharacterized protein from Staphylococcus epidermidis.